A 233-amino-acid polypeptide reads, in one-letter code: tRNA pseudouridine synthase B (233 aa).

D48 (nucleophile) is an active-site residue.

The protein belongs to the pseudouridine synthase TruB family. Type 1 subfamily.

It catalyses the reaction uridine(55) in tRNA = pseudouridine(55) in tRNA. In terms of biological role, responsible for synthesis of pseudouridine from uracil-55 in the psi GC loop of transfer RNAs. The chain is tRNA pseudouridine synthase B from Bacteroides fragilis (strain ATCC 25285 / DSM 2151 / CCUG 4856 / JCM 11019 / LMG 10263 / NCTC 9343 / Onslow / VPI 2553 / EN-2).